The following is a 193-amino-acid chain: Probable nicotinate-nucleotide adenylyltransferase (193 aa).

The protein belongs to the NadD family.

The enzyme catalyses nicotinate beta-D-ribonucleotide + ATP + H(+) = deamido-NAD(+) + diphosphate. The protein operates within cofactor biosynthesis; NAD(+) biosynthesis; deamido-NAD(+) from nicotinate D-ribonucleotide: step 1/1. Functionally, catalyzes the reversible adenylation of nicotinate mononucleotide (NaMN) to nicotinic acid adenine dinucleotide (NaAD). The protein is Probable nicotinate-nucleotide adenylyltransferase of Endomicrobium trichonymphae.